A 65-amino-acid polypeptide reads, in one-letter code: Peptide ToAcP (65 aa).

An N-terminal signal peptide occupies residues 1–24 (MKMKMIVVISILLIVFSLSSKAMS). Residues 25-34 (LEDEQESVQR) constitute a propeptide that is removed on maturation. An Alanine amide modification is found at Ala-58. A propeptide spanning residues 59-65 (GRFDPAV) is cleaved from the precursor.

In terms of tissue distribution, expressed by the venom gland.

It localises to the secreted. Helical wheel projections predict no hydrophobic face, suggesting a non-amphipathic peptide. Does not show antifungal activity. This chain is Peptide ToAcP, found in Tityus obscurus (Amazonian scorpion).